Here is a 785-residue protein sequence, read N- to C-terminus: Gamma-interferon-inducible protein 16 (785 aa).

The Pyrin domain occupies 5-92 (YKNIVLLKGL…KKEKLKAKGL (88 aa)). An N6-acetyllysine modification is found at lysine 45. Residues 88–99 (KAKGLAPSRKRK) are compositionally biased toward basic residues. Positions 88–196 (KAKGLAPSRK…TVAKCQATPR (109 aa)) are disordered. Serine 95 is subject to Phosphoserine. A Nuclear localization signal motif is present at residues 96-100 (RKRKK). Lysine 99 bears the N6-acetyllysine mark. Residues 104–114 (AASPAPSTSST) are compositionally biased toward low complexity. Serine 106 carries the phosphoserine modification. Lysine 116 is covalently cross-linked (Glycyl lysine isopeptide (Lys-Gly) (interchain with G-Cter in SUMO2)). An N6-acetyllysine; alternate modification is found at lysine 128. Lysine 128 participates in a covalent cross-link: Glycyl lysine isopeptide (Lys-Gly) (interchain with G-Cter in SUMO2); alternate. Short sequence motifs (nuclear localization signal) lie at residues 128–131 (KRKK), 134–136 (KEK), and 140–143 (KGSK). Low complexity predominate over residues 166 to 182 (SPSPKTSSSAPPNTSST). A phosphoserine mark is found at serine 168 and serine 174. The interval 192–393 (QATPRRSVLQ…SFIQIKKKTN (202 aa)) is interaction with TP53 C-terminus. An HIN-200 1 domain is found at 193–393 (ATPRRSVLQK…SFIQIKKKTN (201 aa)). Residue lysine 214 is modified to N6-acetyllysine. The tract at residues 388–442 (IKKKTNPRNNDPKSMKLPQEQSQLPNPSEAGTTFPESHLWTPQMPPTTPSSSFFT) is disordered. The span at 406–422 (QEQSQLPNPSEAGTTFP) shows a compositional bias: polar residues. N6-acetyllysine occurs at positions 444 and 451. An HIN-200 2 domain is found at 566-765 (EVSIEDSAQS…SHIKVIKTRK (200 aa)). Residues 571–766 (DSAQSDLKEV…HIKVIKTRKN (196 aa)) form an interaction with TP53 core domain region. A Phosphoserine modification is found at serine 575. N6-acetyllysine is present on residues lysine 598 and lysine 614. Lysine 683 participates in a covalent cross-link: Glycyl lysine isopeptide (Lys-Gly) (interchain with G-Cter in SUMO2). Serine 780 bears the Phosphoserine mark.

It belongs to the HIN-200 family. As to quaternary structure, forms homooligomers. Interacts with TMEM173, AIM2, PYCARD and CASP1. Interacts with BRCA1, TP53, E2F1, RB1 and SP1. Interacts with MTA1. Interacts with MTA1. Interacts with PYDC5. Post-translationally, lysine acetylation in the multipartite nuclear localization signal (NLS) regulates the subcellular location. Phosphorylated on Ser and Thr.

It localises to the nucleus. The protein localises to the cytoplasm. Binds double-stranded DNA. Binds preferentially to supercoiled DNA and cruciform DNA structures. Seems to be involved in transcriptional regulation. May function as a transcriptional repressor. Could have a role in the regulation of hematopoietic differentiation through activation of unknown target genes. Controls cellular proliferation by modulating the functions of cell cycle regulatory factors including p53/TP53 and the retinoblastoma protein. May be involved in TP53-mediated transcriptional activation by enhancing TP53 sequence-specific DNA binding and modulating TP53 phosphorylation status. Seems to be involved in energy-level-dependent activation of the ATM/ AMPK/TP53 pathway coupled to regulation of autophagy. May be involved in regulation of TP53-mediated cell death also involving BRCA1. May be involved in the senescence of prostate epithelial cells. Involved in innate immune response by recognizing viral dsDNA in the cytosol and probably in the nucleus. After binding to viral DNA in the cytoplasm recruits TMEM173/STING and mediates the induction of IFN-beta. Has anti-inflammatory activity and inhibits the activation of the AIM2 inflammasome, probably via association with AIM2. Proposed to bind viral DNA in the nucleus and to induce the formation of nuclear caspase-1-activating inflammasome formation via association with PYCARD. Inhibits replication of herpesviruses probably by interfering with promoter recruitment of members of the Sp1 family of transcription factors. This chain is Gamma-interferon-inducible protein 16 (IFI16), found in Pongo abelii (Sumatran orangutan).